The sequence spans 714 residues: Centromere/kinetochore protein zw10 (714 aa).

This sequence belongs to the ZW10 family.

It is found in the cytoplasm. Its subcellular location is the nucleus. The protein localises to the chromosome. The protein resides in the centromere. It localises to the kinetochore. Required for accurate chromosome segregation. This Drosophila grimshawi (Hawaiian fruit fly) protein is Centromere/kinetochore protein zw10 (mit(1)15).